The chain runs to 444 residues: Putative dipeptidase CPC735_015490 (444 aa).

Residues 1–34 form the signal peptide; that stretch reads MSQRTEHNGSWLRNAGSLLSVLACVAVLASPASA. 3 residues coordinate Zn(2+): His67, Asp69, and Glu178. Residues Cys118 and Cys207 are joined by a disulfide bond. His205 is a substrate binding site. 2 residues coordinate Zn(2+): His250 and His271. Residues Arg282 and Asp342 each contribute to the substrate site. A glycan (N-linked (GlcNAc...) asparagine) is linked at Asn413.

This sequence belongs to the metallo-dependent hydrolases superfamily. Peptidase M19 family. Zn(2+) is required as a cofactor.

The catalysed reaction is an L-aminoacyl-L-amino acid + H2O = 2 an L-alpha-amino acid. Hydrolyzes a wide range of dipeptides. The sequence is that of Putative dipeptidase CPC735_015490 from Coccidioides posadasii (strain C735) (Valley fever fungus).